A 532-amino-acid polypeptide reads, in one-letter code: Egg peptide speract receptor (532 aa).

The signal sequence occupies residues 1-30; that stretch reads MGLPMMLQQYCWAACLVICIAISSVDDVGA. The Extracellular portion of the chain corresponds to 31–491; sequence EQNYGREAVE…VVCEGSTAPP (461 aa). 4 consecutive SRCR domains span residues 43–144, 153–257, 264–366, and 382–485; these read IRLI…VECL, LRMI…VVCK, IRLM…VVCA, and VRIV…VVCE. 12 cysteine pairs are disulfide-bonded: Cys68-Cys133, Cys81-Cys143, Cys112-Cys122, Cys178-Cys244, Cys191-Cys256, Cys223-Cys233, Cys289-Cys355, Cys302-Cys365, Cys335-Cys345, Cys406-Cys475, Cys419-Cys484, and Cys454-Cys465. N-linked (GlcNAc...) asparagine glycans are attached at residues Asn78 and Asn115. Asn459 carries N-linked (GlcNAc...) asparagine glycosylation. Residues 492–520 form a helical membrane-spanning segment; that stretch reads SGMSIAVIGGAAGGGVAGLAVAAFAFYYI. Topologically, residues 521-532 are cytoplasmic; the sequence is KFVKPAGGGGQA.

Its subcellular location is the membrane. In terms of biological role, receptor for the egg peptide speract. This is Egg peptide speract receptor from Strongylocentrotus purpuratus (Purple sea urchin).